The primary structure comprises 255 residues: Electron transfer flavoprotein beta subunit lysine methyltransferase (255 aa).

Residues 1–32 (MAFSLCWKAPRSQWSFLQALNSGFPLFPWRTV) constitute a mitochondrion transit peptide.

This sequence belongs to the methyltransferase superfamily. ETFBKMT family. In terms of assembly, interacts with HSPD1; this protein may possibly be a methylation substrate.

Its subcellular location is the cytoplasm. It is found in the mitochondrion matrix. It catalyses the reaction L-lysyl-[protein] + 3 S-adenosyl-L-methionine = N(6),N(6),N(6)-trimethyl-L-lysyl-[protein] + 3 S-adenosyl-L-homocysteine + 3 H(+). Its function is as follows. Protein-lysine methyltransferase that selectively trimethylates the flavoprotein ETFB in mitochondria. Thereby, may negatively regulate the function of ETFB in electron transfer from Acyl-CoA dehydrogenases to the main respiratory chain. In Rattus norvegicus (Rat), this protein is Electron transfer flavoprotein beta subunit lysine methyltransferase.